The chain runs to 212 residues: Thymidylate kinase (212 aa).

Residue 10 to 17 (GGEGSGKT) coordinates ATP.

This sequence belongs to the thymidylate kinase family.

The catalysed reaction is dTMP + ATP = dTDP + ADP. Phosphorylation of dTMP to form dTDP in both de novo and salvage pathways of dTTP synthesis. The chain is Thymidylate kinase from Marinomonas sp. (strain MWYL1).